The following is a 303-amino-acid chain: Biphenyl-2,3-diol 1,2-dioxygenase (303 aa).

VOC domains follow at residues 5-119 and 143-264; these read SLGY…IYYG and GLGH…YGWS. Positions 146, 210, and 260 each coordinate Fe cation. Positions 283-303 are disordered; it reads WGHKSVRDKALRATKHEQQPE. Positions 287–303 are enriched in basic and acidic residues; sequence SVRDKALRATKHEQQPE.

It belongs to the extradiol ring-cleavage dioxygenase family. As to quaternary structure, homooctamer. Fe(2+) is required as a cofactor.

It catalyses the reaction biphenyl-2,3-diol + O2 = 2-hydroxy-6-oxo-6-phenylhexa-2,4-dienoate + H(+). Its pathway is xenobiotic degradation; biphenyl degradation; 2-hydroxy-2,4-pentadienoate and benzoate from biphenyl: step 3/4. In Metapseudomonas furukawaii (Pseudomonas furukawaii), this protein is Biphenyl-2,3-diol 1,2-dioxygenase (bphC).